The primary structure comprises 507 residues: ATP synthase subunit alpha, chloroplastic (507 aa).

ATP is bound at residue 170–177; the sequence is GDRQTGKT.

Belongs to the ATPase alpha/beta chains family. As to quaternary structure, F-type ATPases have 2 components, CF(1) - the catalytic core - and CF(0) - the membrane proton channel. CF(1) has five subunits: alpha(3), beta(3), gamma(1), delta(1), epsilon(1). CF(0) has four main subunits: a, b, b' and c.

The protein resides in the plastid. It localises to the chloroplast thylakoid membrane. The enzyme catalyses ATP + H2O + 4 H(+)(in) = ADP + phosphate + 5 H(+)(out). Its function is as follows. Produces ATP from ADP in the presence of a proton gradient across the membrane. The alpha chain is a regulatory subunit. This is ATP synthase subunit alpha, chloroplastic from Atropa belladonna (Belladonna).